The following is a 450-amino-acid chain: Chromosomal replication initiator protein DnaA (450 aa).

The segment at 1-73 (MNTKELWIEV…KNILKKLTGI (73 aa)) is domain I, interacts with DnaA modulators. Positions 73–104 (IQYNISFELEKNINKQASVISKIDTLTENNNL) are domain II. A domain III, AAA+ region region spans residues 105–326 (AYYENYTFEN…GAIKRLLFLA (222 aa)). Residues glycine 149, glycine 151, lysine 152, and threonine 153 each coordinate ATP. The interval 327 to 450 (VMNKKPNEII…NAIRRKIEGR (124 aa)) is domain IV, binds dsDNA.

This sequence belongs to the DnaA family. As to quaternary structure, oligomerizes as a right-handed, spiral filament on DNA at oriC.

Its subcellular location is the cytoplasm. Functionally, plays an essential role in the initiation and regulation of chromosomal replication. ATP-DnaA binds to the origin of replication (oriC) to initiate formation of the DNA replication initiation complex once per cell cycle. Binds the DnaA box (a 9 base pair repeat at the origin) and separates the double-stranded (ds)DNA. Forms a right-handed helical filament on oriC DNA; dsDNA binds to the exterior of the filament while single-stranded (ss)DNA is stabiized in the filament's interior. The ATP-DnaA-oriC complex binds and stabilizes one strand of the AT-rich DNA unwinding element (DUE), permitting loading of DNA polymerase. After initiation quickly degrades to an ADP-DnaA complex that is not apt for DNA replication. Binds acidic phospholipids. In Spiroplasma citri, this protein is Chromosomal replication initiator protein DnaA.